A 617-amino-acid chain; its full sequence is Proline--tRNA ligase (617 aa).

The protein belongs to the class-II aminoacyl-tRNA synthetase family. ProS type 1 subfamily. In terms of assembly, homodimer.

The protein localises to the cytoplasm. It carries out the reaction tRNA(Pro) + L-proline + ATP = L-prolyl-tRNA(Pro) + AMP + diphosphate. Catalyzes the attachment of proline to tRNA(Pro) in a two-step reaction: proline is first activated by ATP to form Pro-AMP and then transferred to the acceptor end of tRNA(Pro). As ProRS can inadvertently accommodate and process non-cognate amino acids such as alanine and cysteine, to avoid such errors it has two additional distinct editing activities against alanine. One activity is designated as 'pretransfer' editing and involves the tRNA(Pro)-independent hydrolysis of activated Ala-AMP. The other activity is designated 'posttransfer' editing and involves deacylation of mischarged Ala-tRNA(Pro). The misacylated Cys-tRNA(Pro) is not edited by ProRS. The protein is Proline--tRNA ligase of Streptococcus pneumoniae (strain 70585).